Reading from the N-terminus, the 129-residue chain is Small ribosomal subunit protein uS11 (129 aa).

The protein belongs to the universal ribosomal protein uS11 family. Part of the 30S ribosomal subunit. Interacts with proteins S7 and S18. Binds to IF-3.

In terms of biological role, located on the platform of the 30S subunit, it bridges several disparate RNA helices of the 16S rRNA. Forms part of the Shine-Dalgarno cleft in the 70S ribosome. This is Small ribosomal subunit protein uS11 from Pseudomonas entomophila (strain L48).